Consider the following 589-residue polypeptide: Actin-histidine N-methyltransferase (589 aa).

The tract at residues 1-22 (MGKKSRVKTQKSGTGATATVSP) is disordered. A compositionally biased stretch (polar residues) spans 10–20 (QKSGTGATATV). S-adenosyl-L-methionine-binding positions include arginine 75, 104-106 (EGF), arginine 254, 275-279 (DMCNH), and 325-327 (SGF). The SET domain maps to 94–314 (EGFEMVNFKE…AGEQIYIFYG (221 aa)). Serine 513 carries the post-translational modification Phosphoserine. A disordered region spans residues 547–589 (LVNGERSFPNGTRSEEDLKQEERKRAKGDAKESSSDSTDAVKE). Basic and acidic residues predominate over residues 559–589 (RSEEDLKQEERKRAKGDAKESSSDSTDAVKE).

The protein belongs to the class V-like SAM-binding methyltransferase superfamily. SETD3 actin-histidine methyltransferase family. As to quaternary structure, interacts with MYOD1. Phosphorylated by GSK3B, which is required for recognition by the SCF(FBXW7) complex and subsequent degradation. In terms of processing, ubiquitinated by the SCF(FBXW7) complex following phosphorylation by GSK3B, leading to its degradation by the proteasome.

It is found in the cytoplasm. Its subcellular location is the nucleus. The catalysed reaction is L-histidyl-[protein] + S-adenosyl-L-methionine = N(tele)-methyl-L-histidyl-[protein] + S-adenosyl-L-homocysteine + H(+). In terms of biological role, protein-histidine N-methyltransferase that specifically mediates 3-methylhistidine (tele-methylhistidine) methylation of actin at 'His-73'. Histidine methylation of actin is required for smooth muscle contraction of the laboring uterus during delivery. Does not have protein-lysine N-methyltransferase activity and probably only catalyzes histidine methylation of actin. This chain is Actin-histidine N-methyltransferase, found in Dasypus novemcinctus (Nine-banded armadillo).